A 417-amino-acid polypeptide reads, in one-letter code: MSLSNKLSIRDLDLKNKRVLIRVDFNVPMKDGAITNNNRIVQALPTVKYALDNGASAVILMSHLGRPNGEAVAKYSLKPVAAEVEKLLGKPVEFLNDCVGPDVEKACQSATGGKVILLENLRFHIEEEGSAKVRWSKVKADAEAVKKFRASLTALADIYVNDAFGTAHRAHSSMVGVDLSQRAAGFLMQKELEYFAKALENPARPFLAILGGAKVSDKIQLIENMLDKVNALIVCGGMAFTFKKTLDNVKQIGKSLFDEAGSKLVRNLVKKAAEKNVKLVFPVDFVTADKFAPDANTGYATDADGIPDEWEGLDCGKKSSELFREEILKSKTIVWNGPSGVFEFDAFANGTKSVLNAVIEATKEGATTIIGGGDTATAALKWGAEGKVSHISTGGGASLELLEGKELPGVTALSSKN.

(2R)-3-phosphoglycerate contacts are provided by valine 23, aspartate 24, phenylalanine 25, asparagine 26, asparagine 38, arginine 39, serine 62, histidine 63, glycine 65, arginine 66, leucine 121, arginine 122, histidine 168, and arginine 169. Position 212 (glycine 212) interacts with ADP. Residue glycine 212 participates in CDP binding. Residues alanine 213 and lysine 214 each coordinate AMP. Alanine 213 is an ATP binding site. Mg(2+) is bound at residue alanine 213. Aspartate 217 is a binding site for CDP. Aspartate 217 contributes to the Mg(2+) binding site. Lysine 218 is an AMP binding site. Lysine 218 is an ATP binding site. Glycine 236 serves as a coordination point for ADP. Residue glycine 236 participates in CDP binding. 2 residues coordinate AMP: glycine 237 and glycine 312. Residues glycine 237 and glycine 312 each contribute to the ATP site. CDP-binding residues include glycine 337 and phenylalanine 342. Residue phenylalanine 342 coordinates ADP. Residue glutamate 343 coordinates AMP. Positions 343, 374, and 375 each coordinate ATP. Aspartate 374 contacts Mg(2+).

Belongs to the phosphoglycerate kinase family. Monomer. Mg(2+) serves as cofactor.

It localises to the cytoplasm. The protein resides in the mitochondrion. The catalysed reaction is (2R)-3-phosphoglycerate + ATP = (2R)-3-phospho-glyceroyl phosphate + ADP. It participates in carbohydrate degradation; glycolysis; pyruvate from D-glyceraldehyde 3-phosphate: step 2/5. Catalyzes one of the two ATP producing reactions in the glycolytic pathway via the reversible conversion of 1,3-diphosphoglycerate to 3-phosphoglycerate. Both L- and D- forms of purine and pyrimidine nucleotides can be used as substrates, but the activity is much lower on pyrimidines. Negatively regulates the biosynthesis of acetyl-CoA from pyruvate in the mitochondrion. This is Phosphoglycerate kinase 2 (PGK2) from Rhizopus niveus.